Here is a 237-residue protein sequence, read N- to C-terminus: Uridylate kinase (237 aa).

11–14 is a binding site for ATP; sequence KLSG. G52 provides a ligand contact to UMP. Residues G53 and R57 each contribute to the ATP site. Residues D72 and 134 to 141 contribute to the UMP site; that span reads TGYSYFTT. 3 residues coordinate ATP: N162, Y168, and D171.

Belongs to the UMP kinase family. As to quaternary structure, homohexamer.

It localises to the cytoplasm. The enzyme catalyses UMP + ATP = UDP + ADP. Its pathway is pyrimidine metabolism; CTP biosynthesis via de novo pathway; UDP from UMP (UMPK route): step 1/1. With respect to regulation, inhibited by UTP. Functionally, catalyzes the reversible phosphorylation of UMP to UDP. This is Uridylate kinase from Mycoplasma capricolum subsp. capricolum (strain California kid / ATCC 27343 / NCTC 10154).